A 423-amino-acid chain; its full sequence is Kynureninase (423 aa).

Pyridoxal 5'-phosphate-binding positions include leucine 105, serine 106, 133–136 (FPSD), aspartate 218, histidine 221, and tyrosine 243. N6-(pyridoxal phosphate)lysine is present on lysine 244. Positions 273 and 301 each coordinate pyridoxal 5'-phosphate.

It belongs to the kynureninase family. Homodimer. Requires pyridoxal 5'-phosphate as cofactor.

It carries out the reaction L-kynurenine + H2O = anthranilate + L-alanine + H(+). It catalyses the reaction 3-hydroxy-L-kynurenine + H2O = 3-hydroxyanthranilate + L-alanine + H(+). Its pathway is amino-acid degradation; L-kynurenine degradation; L-alanine and anthranilate from L-kynurenine: step 1/1. The protein operates within cofactor biosynthesis; NAD(+) biosynthesis; quinolinate from L-kynurenine: step 2/3. In terms of biological role, catalyzes the cleavage of L-kynurenine (L-Kyn) and L-3-hydroxykynurenine (L-3OHKyn) into anthranilic acid (AA) and 3-hydroxyanthranilic acid (3-OHAA), respectively. The sequence is that of Kynureninase from Xanthomonas oryzae pv. oryzae (strain KACC10331 / KXO85).